An 87-amino-acid chain; its full sequence is Cell division protein FtsL (87 aa).

Topologically, residues 1–3 are cytoplasmic; it reads MSR. The helical transmembrane segment at 4–23 threads the bilayer; that stretch reads LLLIVLLACSIASAIGVVYM. Residues 24–87 are Periplasmic-facing; that stretch reads RHMHRKLFVQ…ETSDIVVIRP (64 aa).

The protein belongs to the FtsL family. In terms of assembly, part of a complex composed of FtsB, FtsL and FtsQ.

Its subcellular location is the cell inner membrane. Its function is as follows. Essential cell division protein. May link together the upstream cell division proteins, which are predominantly cytoplasmic, with the downstream cell division proteins, which are predominantly periplasmic. In Xanthomonas campestris pv. campestris (strain ATCC 33913 / DSM 3586 / NCPPB 528 / LMG 568 / P 25), this protein is Cell division protein FtsL.